A 284-amino-acid polypeptide reads, in one-letter code: Bifunctional protein FolD (284 aa).

NADP(+) contacts are provided by residues 166–168 (GAS) and I232.

The protein belongs to the tetrahydrofolate dehydrogenase/cyclohydrolase family. Homodimer.

The catalysed reaction is (6R)-5,10-methylene-5,6,7,8-tetrahydrofolate + NADP(+) = (6R)-5,10-methenyltetrahydrofolate + NADPH. It carries out the reaction (6R)-5,10-methenyltetrahydrofolate + H2O = (6R)-10-formyltetrahydrofolate + H(+). The protein operates within one-carbon metabolism; tetrahydrofolate interconversion. Functionally, catalyzes the oxidation of 5,10-methylenetetrahydrofolate to 5,10-methenyltetrahydrofolate and then the hydrolysis of 5,10-methenyltetrahydrofolate to 10-formyltetrahydrofolate. The polypeptide is Bifunctional protein FolD (Tolumonas auensis (strain DSM 9187 / NBRC 110442 / TA 4)).